Here is a 285-residue protein sequence, read N- to C-terminus: Pantothenate synthetase (285 aa).

Position 30–37 (30–37 (MGFLHEGH)) interacts with ATP. His-37 functions as the Proton donor in the catalytic mechanism. (R)-pantoate is bound at residue Gln-61. Gln-61 is a binding site for beta-alanine. 147-150 (GQKD) serves as a coordination point for ATP. Residue Gln-153 participates in (R)-pantoate binding. ATP contacts are provided by residues Val-176 and 184 to 187 (KSSR).

Belongs to the pantothenate synthetase family. In terms of assembly, homodimer.

It localises to the cytoplasm. The enzyme catalyses (R)-pantoate + beta-alanine + ATP = (R)-pantothenate + AMP + diphosphate + H(+). Its pathway is cofactor biosynthesis; (R)-pantothenate biosynthesis; (R)-pantothenate from (R)-pantoate and beta-alanine: step 1/1. In terms of biological role, catalyzes the condensation of pantoate with beta-alanine in an ATP-dependent reaction via a pantoyl-adenylate intermediate. This is Pantothenate synthetase from Listeria innocua serovar 6a (strain ATCC BAA-680 / CLIP 11262).